We begin with the raw amino-acid sequence, 130 residues long: Seminal plasma protein pB1 (130 aa).

The signal sequence occupies residues 1-25 (MAPRLGIFLLWAGVSVFLPLDPVNG). 2 Fibronectin type-II domains span residues 39 to 83 (TSDD…YCRS) and 84 to 130 (TDYA…WRYC). Intrachain disulfides connect C44-C68, C58-C81, C89-C115, and C103-C130.

The protein belongs to the seminal plasma protein family. In terms of tissue distribution, component of seminal plasma.

Its subcellular location is the secreted. Its function is as follows. May form a complex with spermadhesin AQN-1 which possesses phosphorylcholine-binding activity. This is Seminal plasma protein pB1 from Sus scrofa (Pig).